Consider the following 377-residue polypeptide: Putative glutamate--cysteine ligase 2 (377 aa).

This sequence belongs to the glutamate--cysteine ligase type 2 family. YbdK subfamily.

It catalyses the reaction L-cysteine + L-glutamate + ATP = gamma-L-glutamyl-L-cysteine + ADP + phosphate + H(+). ATP-dependent carboxylate-amine ligase which exhibits weak glutamate--cysteine ligase activity. This chain is Putative glutamate--cysteine ligase 2, found in Ralstonia pickettii (strain 12J).